The sequence spans 460 residues: Acetyl-CoA decarbonylase/synthase complex subunit beta (460 aa).

[Ni-Fe-S] cluster is bound by residues cysteine 188, cysteine 191, cysteine 277, and cysteine 279. A compositionally biased stretch (acidic residues) spans 402–416 (EETEPEEEEVEEAYP). Residues 402–422 (EETEPEEEEVEEAYPEETPIP) are disordered.

It belongs to the CdhC family. Monomer. The ACDS complex is made up of alpha, epsilon, beta, gamma and delta chains with a probable stoichiometry of (alpha(2)epsilon(2))(4)-beta(8)-(gamma(1)delta(1))(8). [Ni-Fe-S] cluster serves as cofactor.

The catalysed reaction is Co(I)-[corrinoid Fe-S protein] + acetyl-CoA + H(+) = methyl-Co(III)-[corrinoid Fe-S protein] + CO + CoA. Its function is as follows. Part of a complex that catalyzes the reversible cleavage of acetyl-CoA, allowing autotrophic growth from CO(2). The alpha-epsilon complex generates CO from CO(2), while the beta subunit (this protein) combines the CO with CoA and a methyl group to form acetyl-CoA. The methyl group, which is incorporated into acetyl-CoA, is transferred to the beta subunit by a corrinoid iron-sulfur protein (the gamma-delta complex). This Methanothermobacter thermautotrophicus (strain ATCC 29096 / DSM 1053 / JCM 10044 / NBRC 100330 / Delta H) (Methanobacterium thermoautotrophicum) protein is Acetyl-CoA decarbonylase/synthase complex subunit beta.